We begin with the raw amino-acid sequence, 282 residues long: Bifunctional protein FolD 1 (282 aa).

NADP(+) is bound by residues 167–169 and serine 192; that span reads GRS.

The protein belongs to the tetrahydrofolate dehydrogenase/cyclohydrolase family. As to quaternary structure, homodimer.

The catalysed reaction is (6R)-5,10-methylene-5,6,7,8-tetrahydrofolate + NADP(+) = (6R)-5,10-methenyltetrahydrofolate + NADPH. It carries out the reaction (6R)-5,10-methenyltetrahydrofolate + H2O = (6R)-10-formyltetrahydrofolate + H(+). The protein operates within one-carbon metabolism; tetrahydrofolate interconversion. Its function is as follows. Catalyzes the oxidation of 5,10-methylenetetrahydrofolate to 5,10-methenyltetrahydrofolate and then the hydrolysis of 5,10-methenyltetrahydrofolate to 10-formyltetrahydrofolate. In Colwellia psychrerythraea (strain 34H / ATCC BAA-681) (Vibrio psychroerythus), this protein is Bifunctional protein FolD 1.